We begin with the raw amino-acid sequence, 730 residues long: Ribosomal RNA large subunit methyltransferase K/L (730 aa).

The THUMP domain occupies 46–157 (TAYRLCLWSR…RGEAILSLDL (112 aa)).

This sequence belongs to the methyltransferase superfamily. RlmKL family.

Its subcellular location is the cytoplasm. The enzyme catalyses guanosine(2445) in 23S rRNA + S-adenosyl-L-methionine = N(2)-methylguanosine(2445) in 23S rRNA + S-adenosyl-L-homocysteine + H(+). It carries out the reaction guanosine(2069) in 23S rRNA + S-adenosyl-L-methionine = N(2)-methylguanosine(2069) in 23S rRNA + S-adenosyl-L-homocysteine + H(+). In terms of biological role, specifically methylates the guanine in position 2445 (m2G2445) and the guanine in position 2069 (m7G2069) of 23S rRNA. In Pseudomonas putida (strain W619), this protein is Ribosomal RNA large subunit methyltransferase K/L.